The following is a 158-amino-acid chain: MSGIALSRLAQERKAWRKDHPLGLVAVPTKNPDGTMNLMNGECAIPGKKGTPWEGGLFKLRMLFKDDYPSSPPKCKFEPPLFHPNVYPSGTVCLSILEEDKDWRPAITIKQILLGIQELLNEPNIQDPAQAEAYTIFCQDRTEYEKRVRAQAKKFSPS.

The region spanning 4–157 is the UBC core domain; it reads IALSRLAQER…VRAQAKKFSP (154 aa). The interaction with sumo1 stretch occupies residues 13 to 18; it reads RKAWRK. The active-site Glycyl thioester intermediate is the cysteine 93.

This sequence belongs to the ubiquitin-conjugating enzyme family. In terms of assembly, forms a tight complex with RANGAP1 and RANBP2.

The protein localises to the nucleus. It functions in the pathway protein modification; protein sumoylation. In terms of biological role, accepts the ubiquitin-like proteins SUMO1, SUMO2 and SUMO3 from the UBLE1A-UBLE1B E1 complex and catalyzes their covalent attachment to other proteins with the help of an E3 ligase such as RANBP2 or CBX4. Essential for nuclear architecture and chromosome segregation. This chain is SUMO-conjugating enzyme UBC9 (ube2i), found in Pagrus major (Red sea bream).